Here is a 186-residue protein sequence, read N- to C-terminus: Ribosome-recycling factor (186 aa).

It belongs to the RRF family.

Its subcellular location is the cytoplasm. Its function is as follows. Responsible for the release of ribosomes from messenger RNA at the termination of protein biosynthesis. May increase the efficiency of translation by recycling ribosomes from one round of translation to another. This is Ribosome-recycling factor from Cupriavidus pinatubonensis (strain JMP 134 / LMG 1197) (Cupriavidus necator (strain JMP 134)).